Reading from the N-terminus, the 429-residue chain is Glutamate-1-semialdehyde 2,1-aminomutase 2 (429 aa).

Position 268 is an N6-(pyridoxal phosphate)lysine (K268).

Belongs to the class-III pyridoxal-phosphate-dependent aminotransferase family. HemL subfamily. In terms of assembly, homodimer. It depends on pyridoxal 5'-phosphate as a cofactor.

The protein resides in the cytoplasm. It carries out the reaction (S)-4-amino-5-oxopentanoate = 5-aminolevulinate. It functions in the pathway porphyrin-containing compound metabolism; protoporphyrin-IX biosynthesis; 5-aminolevulinate from L-glutamyl-tRNA(Glu): step 2/2. The chain is Glutamate-1-semialdehyde 2,1-aminomutase 2 from Bacillus cereus (strain AH820).